Reading from the N-terminus, the 327-residue chain is Altered inheritance rate of mitochondria protein 25 (327 aa).

The protein belongs to the phospholipid scramblase family.

The protein resides in the mitochondrion. The polypeptide is Altered inheritance rate of mitochondria protein 25 (AIM25) (Saccharomyces cerevisiae (strain ATCC 204508 / S288c) (Baker's yeast)).